Here is a 907-residue protein sequence, read N- to C-terminus: Avirulence protein A (907 aa).

Composition is skewed to polar residues over residues 1–11 (MWNVSKSSNNL) and 124–136 (AGSNGDINKSSDP). 2 disordered regions span residues 1-47 (MWNV…HDQL) and 116-157 (NDDF…KKSY).

In Pseudomonas savastanoi pv. glycinea (Pseudomonas syringae pv. glycinea), this protein is Avirulence protein A (avrA).